A 474-amino-acid polypeptide reads, in one-letter code: Chromosomal replication initiator protein DnaA (474 aa).

Residues methionine 1–isoleucine 90 are domain I, interacts with DnaA modulators. Residues isoleucine 91–serine 137 are domain II. Residues glutamine 112 to serine 137 are disordered. Residues glutamine 128–serine 137 are compositionally biased toward polar residues. A domain III, AAA+ region region spans residues asparagine 138–alanine 354. The ATP site is built by glycine 182, glycine 184, lysine 185, and threonine 186. Residues asparagine 355–threonine 474 form a domain IV, binds dsDNA region.

Belongs to the DnaA family. Oligomerizes as a right-handed, spiral filament on DNA at oriC.

It localises to the cytoplasm. Plays an essential role in the initiation and regulation of chromosomal replication. ATP-DnaA binds to the origin of replication (oriC) to initiate formation of the DNA replication initiation complex once per cell cycle. Binds the DnaA box (a 9 base pair repeat at the origin) and separates the double-stranded (ds)DNA. Forms a right-handed helical filament on oriC DNA; dsDNA binds to the exterior of the filament while single-stranded (ss)DNA is stabiized in the filament's interior. The ATP-DnaA-oriC complex binds and stabilizes one strand of the AT-rich DNA unwinding element (DUE), permitting loading of DNA polymerase. After initiation quickly degrades to an ADP-DnaA complex that is not apt for DNA replication. Binds acidic phospholipids. The chain is Chromosomal replication initiator protein DnaA from Photobacterium profundum (strain SS9).